A 141-amino-acid polypeptide reads, in one-letter code: HTH-type transcriptional repressor NsrR (141 aa).

Positions 2-129 (QLTSFTDYGL…DNYTLADMVK (128 aa)) constitute an HTH rrf2-type domain. A DNA-binding region (H-T-H motif) is located at residues 28-51 (ISQVTEVYGVSRNHMVKIINQLSR). [2Fe-2S] cluster contacts are provided by Cys91, Cys96, and Cys102.

[2Fe-2S] cluster is required as a cofactor.

Functionally, nitric oxide-sensitive repressor of genes involved in protecting the cell against nitrosative stress. May require iron for activity. The chain is HTH-type transcriptional repressor NsrR from Yersinia pseudotuberculosis serotype O:1b (strain IP 31758).